We begin with the raw amino-acid sequence, 123 residues long: QNDAYRGFLRKHYDPSPTGHDDRYCNTMMERRNMTRPCKDTNTFIHGNSDDIRAVCDDRNGEPYRNGLRRSRSPFQVTTCRHRGGSPRPPCRYRAFRANRVIVIRCRDGFPIHLEENFIPPRP.

Residue Q1 is modified to Pyrrolidone carboxylic acid. Catalysis depends on H12, which acts as the Proton acceptor. 3 disulfides stabilise this stretch: C25-C80, C38-C91, and C56-C106. Residues 30 to 34 (ERRNM) carry the Nucleolar localization signal motif. N-linked (GlcNAc...) asparagine glycosylation is present at N33. D40, H82, and H113 together coordinate Zn(2+). The active-site Proton donor is the H113.

Belongs to the pancreatic ribonuclease family. As to expression, serum and milk.

It localises to the cytoplasmic vesicle. The protein localises to the secretory vesicle lumen. Its subcellular location is the secreted. The protein resides in the nucleus. It is found in the nucleolus. Its activity is regulated as follows. Divalent metal ions, such as Cu2+ and Zn2+, may inhibit the ribonucleolytic activity. In terms of biological role, binds tightly to placental ribonuclease inhibitor and has very low ribonuclease activity. Has potent angiogenic activity. Angiogenin induces vascularization of normal and malignant tissues. Abolishes protein synthesis by specifically hydrolyzing cellular tRNAs. This chain is Angiogenin-2, found in Bos taurus (Bovine).